Consider the following 314-residue polypeptide: Malate dehydrogenase (314 aa).

NAD(+)-binding positions include 11 to 16 and Asp-35; that span reads GSGNIG. Residues Arg-84 and Arg-90 each contribute to the substrate site. NAD(+) contacts are provided by residues Asn-97 and 120–122; that span reads ITN. The substrate site is built by Asn-122 and Arg-153. Catalysis depends on His-177, which acts as the Proton acceptor.

This sequence belongs to the LDH/MDH superfamily. MDH type 3 family.

It catalyses the reaction (S)-malate + NAD(+) = oxaloacetate + NADH + H(+). Its function is as follows. Catalyzes the reversible oxidation of malate to oxaloacetate. The polypeptide is Malate dehydrogenase (Rickettsia prowazekii (strain Madrid E)).